The following is a 383-amino-acid chain: Succinyl-diaminopimelate desuccinylase (383 aa).

A Zn(2+)-binding site is contributed by H73. D75 is a catalytic residue. Residue D107 coordinates Zn(2+). Catalysis depends on E141, which acts as the Proton acceptor. Zn(2+)-binding residues include E142, E170, and H356.

Belongs to the peptidase M20A family. DapE subfamily. In terms of assembly, homodimer. It depends on Zn(2+) as a cofactor. Requires Co(2+) as cofactor.

The enzyme catalyses N-succinyl-(2S,6S)-2,6-diaminopimelate + H2O = (2S,6S)-2,6-diaminopimelate + succinate. It participates in amino-acid biosynthesis; L-lysine biosynthesis via DAP pathway; LL-2,6-diaminopimelate from (S)-tetrahydrodipicolinate (succinylase route): step 3/3. In terms of biological role, catalyzes the hydrolysis of N-succinyl-L,L-diaminopimelic acid (SDAP), forming succinate and LL-2,6-diaminopimelate (DAP), an intermediate involved in the bacterial biosynthesis of lysine and meso-diaminopimelic acid, an essential component of bacterial cell walls. The chain is Succinyl-diaminopimelate desuccinylase from Pseudomonas paraeruginosa (strain DSM 24068 / PA7) (Pseudomonas aeruginosa (strain PA7)).